The sequence spans 107 residues: Metallothionein-1 (107 aa).

A propeptide spanning residues 1–2 (MD) is cleaved from the precursor.

Belongs to the metallothionein superfamily. Type 7 family.

Its function is as follows. The metallothioneins are involved in the cellular sequestration of toxic metal ions. Binds 12 cadmium ions per molecule. This chain is Metallothionein-1, found in Tetrahymena pyriformis.